A 326-amino-acid polypeptide reads, in one-letter code: UDP-3-O-acylglucosamine N-acyltransferase (326 aa).

The active-site Proton acceptor is histidine 235.

It belongs to the transferase hexapeptide repeat family. LpxD subfamily. As to quaternary structure, homotrimer.

It catalyses the reaction a UDP-3-O-[(3R)-3-hydroxyacyl]-alpha-D-glucosamine + a (3R)-hydroxyacyl-[ACP] = a UDP-2-N,3-O-bis[(3R)-3-hydroxyacyl]-alpha-D-glucosamine + holo-[ACP] + H(+). The protein operates within bacterial outer membrane biogenesis; LPS lipid A biosynthesis. Its function is as follows. Catalyzes the N-acylation of UDP-3-O-acylglucosamine using 3-hydroxyacyl-ACP as the acyl donor. Is involved in the biosynthesis of lipid A, a phosphorylated glycolipid that anchors the lipopolysaccharide to the outer membrane of the cell. The chain is UDP-3-O-acylglucosamine N-acyltransferase from Helicobacter hepaticus (strain ATCC 51449 / 3B1).